Reading from the N-terminus, the 753-residue chain is Neuroendocrine convertase 1 (753 aa).

Positions 1–27 (MEQRGWTLQCTAFAFFCVWCALNSVKA) are cleaved as a signal peptide. Positions 28–110 (KRQFVNEWAA…QQYEKERSKR (83 aa)) are excised as a propeptide. Residues 129 to 450 (QWYLQDTRMT…FGLLNAKALV (322 aa)) form the Peptidase S8 domain. Residues Asp167 and His208 each act as charge relay system in the active site. 2 cysteine pairs are disulfide-bonded: Cys225–Cys374 and Cys317–Cys347. The Charge relay system role is filled by Ser382. The N-linked (GlcNAc...) asparagine glycan is linked to Asn401. Residues 460 to 597 (NVPEKKECVV…KLILHGTSSQ (138 aa)) form the P/Homo B domain. The cysteines at positions 467 and 494 are disulfide-linked. The span at 633–651 (QKSLNGNLLVPKNSSSSNV) shows a compositional bias: polar residues. Residues 633–663 (QKSLNGNLLVPKNSSSSNVEGRRDEQVQGTP) are disordered. A glycan (N-linked (GlcNAc...) asparagine) is linked at Asn645.

It belongs to the peptidase S8 family. Furin subfamily. Requires Ca(2+) as cofactor.

It is found in the cytoplasmic vesicle. It localises to the secretory vesicle. The enzyme catalyses Release of protein hormones, neuropeptides and renin from their precursors, generally by hydrolysis of -Lys-Arg-|- bonds.. In terms of biological role, involved in the processing of hormone and other protein precursors at sites comprised of pairs of basic amino acid residues. Substrates include POMC, renin, enkephalin, dynorphin, somatostatin, insulin and AGRP. This is Neuroendocrine convertase 1 (Pcsk1) from Mus musculus (Mouse).